The sequence spans 379 residues: Forkhead box protein E1 (379 aa).

Polar residues predominate over residues 1–11; that stretch reads MTAESQQSPTR. The tract at residues 1–65 is disordered; the sequence is MTAESQQSPT…RRRKRPLQKG (65 aa). The segment covering 54–63 has biased composition (basic residues); it reads KGRRRKRPLQ. A DNA-binding region (fork-head) is located at residues 66–160; the sequence is KPPYSYIALI…DSGSFLRRRK (95 aa). A disordered region spans residues 239 to 265; sequence HSGSEHAQPPNRSISPEVNSTSSSSCN. Positions 251 to 265 are enriched in low complexity; that stretch reads SISPEVNSTSSSSCN.

As to expression, first expressed at late neural tube and early tailbud stages in the hypophyseal placode. Expression continues in the developing pituitary at late tailbud stages. As development progresses, expressed in the mesoderm of the branchial arches. At stage 38, expressed in the developing thyroid and in the pharyngeal endoderm.

The protein localises to the nucleus. Functionally, transcription factor that binds consensus sites on a variety of gene promoters and activate their transcription. The polypeptide is Forkhead box protein E1 (Xenopus laevis (African clawed frog)).